The chain runs to 121 residues: Large ribosomal subunit protein uL14 (121 aa).

It belongs to the universal ribosomal protein uL14 family. Part of the 50S ribosomal subunit. Forms a cluster with proteins L3 and L19. In the 70S ribosome, L14 and L19 interact and together make contacts with the 16S rRNA in bridges B5 and B8.

In terms of biological role, binds to 23S rRNA. Forms part of two intersubunit bridges in the 70S ribosome. The polypeptide is Large ribosomal subunit protein uL14 (Aquifex pyrophilus).